The sequence spans 553 residues: Zinc finger protein Elbow (553 aa).

2 disordered regions span residues 59–243 and 388–407; these read STKQ…MHSP and GGGG…SGGS. Low complexity-rich tracts occupy residues 96 to 110 and 121 to 134; these read SPVS…TGSV and SSSS…TFKP. Polar residues-rich tracts occupy residues 137-146, 153-173, and 224-236; these read PNNNISNITT, TNLS…KSMT, and TAST…NSKE. Positions 287–480 are self-association; it reads SASAAAAAAS…PDAVLSAAAA (194 aa). The tract at residues 287 to 553 is interaction with noc; it reads SASAAAAAAS…YGPRMGSSHP (267 aa). Residues 388-406 are compositionally biased toward gly residues; sequence GGGGGGSSKSSGSQGGSGG. The C2H2-type zinc-finger motif lies at 437 to 466; the sequence is YVCSWIGSDAAYCGKRFGTSDDLFQHLRTH.

Belongs to the Elbow/Noc family. In terms of assembly, self-associates. Interacts with gro and noc.

In terms of biological role, may negatively regulate Notch-induced cell proliferation in the eye-head primordium. May act in leg and wing primordia to negatively regulate body-wall specifying genes and thereby promote appendage formation. Required for tracheal development. In Drosophila melanogaster (Fruit fly), this protein is Zinc finger protein Elbow (elB).